The sequence spans 505 residues: Chromatin assembly factor 1 subunit FAS2 homolog (505 aa).

WD repeat units follow at residues 11–50 (HEQQ…SDKK), 62–101 (SHSS…DGEA), 110–149 (FHHK…VQQK), 152–191 (GHLH…KSKN), 223–268 (FHDE…SRRD), 278–333 (GASK…PILI), and 337–378 (LHYA…LPYN). The disordered stretch occupies residues 479–505 (VTAPPVSTKNSASSKPTKKRITPIAIN).

This sequence belongs to the WD repeat HIR1 family. In terms of assembly, component of the chromatin assembly factor 1 (CAF-1) complex, composed of FSM (FAS1), FAS2 and MSI1.

It localises to the nucleus. Component of the chromatin assembly factor complex (CAF-1) involved in chromatin assembly following DNA replication and DNA repair. Required for several aspects of development, including apical meristem maintenance by regulating the durations of the S- and G2-phases of the cell cycle through its chromatin assembly activity. This chain is Chromatin assembly factor 1 subunit FAS2 homolog (FAS2), found in Oryza sativa subsp. japonica (Rice).